A 209-amino-acid chain; its full sequence is Guanylate kinase (209 aa).

The 179-residue stretch at 8–186 (GVLYIVSAPS…ALQDLVAITR (179 aa)) folds into the Guanylate kinase-like domain. 15–22 (APSGAGKT) provides a ligand contact to ATP.

It belongs to the guanylate kinase family.

It localises to the cytoplasm. The catalysed reaction is GMP + ATP = GDP + ADP. Essential for recycling GMP and indirectly, cGMP. This chain is Guanylate kinase, found in Thiobacillus denitrificans (strain ATCC 25259 / T1).